Consider the following 392-residue polypeptide: tRNA (guanine-N(7)-)-methyltransferase (392 aa).

Residues Glu-123, Glu-148, and Asp-175 each contribute to the S-adenosyl-L-methionine site. The substrate site is built by Lys-201 and Asp-231.

This sequence belongs to the class I-like SAM-binding methyltransferase superfamily. TrmB family.

The enzyme catalyses guanosine(46) in tRNA + S-adenosyl-L-methionine = N(7)-methylguanosine(46) in tRNA + S-adenosyl-L-homocysteine. Its pathway is tRNA modification; N(7)-methylguanine-tRNA biosynthesis. Catalyzes the formation of N(7)-methylguanine at position 46 (m7G46) in tRNA. The protein is tRNA (guanine-N(7)-)-methyltransferase of Campylobacter jejuni subsp. doylei (strain ATCC BAA-1458 / RM4099 / 269.97).